We begin with the raw amino-acid sequence, 647 residues long: 1-deoxy-D-xylulose-5-phosphate synthase (647 aa).

Thiamine diphosphate is bound by residues His88 and 129–131 (GHA). Asp160 lines the Mg(2+) pocket. Thiamine diphosphate is bound by residues 161–162 (GA), Asn189, Tyr300, and Glu377. Asn189 serves as a coordination point for Mg(2+).

Belongs to the transketolase family. DXPS subfamily. In terms of assembly, homodimer. It depends on Mg(2+) as a cofactor. Thiamine diphosphate serves as cofactor.

It carries out the reaction D-glyceraldehyde 3-phosphate + pyruvate + H(+) = 1-deoxy-D-xylulose 5-phosphate + CO2. The protein operates within metabolic intermediate biosynthesis; 1-deoxy-D-xylulose 5-phosphate biosynthesis; 1-deoxy-D-xylulose 5-phosphate from D-glyceraldehyde 3-phosphate and pyruvate: step 1/1. In terms of biological role, catalyzes the acyloin condensation reaction between C atoms 2 and 3 of pyruvate and glyceraldehyde 3-phosphate to yield 1-deoxy-D-xylulose-5-phosphate (DXP). The chain is 1-deoxy-D-xylulose-5-phosphate synthase from Dehalococcoides mccartyi (strain ATCC BAA-2266 / KCTC 15142 / 195) (Dehalococcoides ethenogenes (strain 195)).